The chain runs to 176 residues: Photosystem I assembly protein Ycf4 (176 aa).

2 consecutive transmembrane segments (helical) span residues 22 to 42 (FLWA…GTAS) and 57 to 77 (VMTF…SMLF).

The protein belongs to the Ycf4 family.

Its subcellular location is the plastid thylakoid membrane. Seems to be required for the assembly of the photosystem I complex. In Cuscuta obtusiflora (Peruvian dodder), this protein is Photosystem I assembly protein Ycf4.